The primary structure comprises 280 residues: UDP-2,3-diacylglucosamine pyrophosphatase LpxI (280 aa).

Substrate is bound by residues A12, N74–V75, Q169, T187–D188, K214, and L226–T233.

This sequence belongs to the LpxI family. In terms of assembly, homodimer. The cofactor is Mg(2+).

It localises to the cell inner membrane. The enzyme catalyses UDP-2-N,3-O-bis[(3R)-3-hydroxytetradecanoyl]-alpha-D-glucosamine + H2O = 2-N,3-O-bis[(3R)-3-hydroxytetradecanoyl]-alpha-D-glucosaminyl 1-phosphate + UMP + 2 H(+). It functions in the pathway glycolipid biosynthesis; lipid IV(A) biosynthesis; lipid IV(A) from (3R)-3-hydroxytetradecanoyl-[acyl-carrier-protein] and UDP-N-acetyl-alpha-D-glucosamine: step 4/6. Inhibited by high concentrations of Cu(2+) and Zn(2+). Completely inhibited by EDTA in vitro. Hydrolyzes the pyrophosphate bond of UDP-2,3-diacylglucosamine to form 2,3-diacylglucosamine 1-phosphate (lipid X) and UMP by catalyzing the attack of water at the beta-P atom. Involved in the biosynthesis of lipid A, a phosphorylated glycolipid that anchors the lipopolysaccharide to the outer membrane of the cell. Can functionally complement lpxH deficiency in E.coli. Cannot use CDP-diacylglycerol as substrate. In Caulobacter vibrioides (strain ATCC 19089 / CIP 103742 / CB 15) (Caulobacter crescentus), this protein is UDP-2,3-diacylglucosamine pyrophosphatase LpxI.